The sequence spans 763 residues: DNA polymerase 3 (763 aa).

The protein belongs to the DNA polymerase type-B family.

It catalyses the reaction DNA(n) + a 2'-deoxyribonucleoside 5'-triphosphate = DNA(n+1) + diphosphate. This is DNA polymerase 3 (dpo3) from Saccharolobus shibatae (strain ATCC 51178 / DSM 5389 / JCM 8931 / NBRC 15437 / B12) (Sulfolobus shibatae).